Here is a 250-residue protein sequence, read N- to C-terminus: Acidic leucine-rich nuclear phosphoprotein 32 family member E (250 aa).

Serine 8 carries the phosphoserine modification. LRR repeat units lie at residues glutamate 43–proline 64, lysine 65–cysteine 87, and asparagine 89–glutamine 110. Residues cysteine 123–aspartate 161 enclose the LRRCT domain. 3 stretches are compositionally biased toward acidic residues: residues aspartate 149–glutamate 171, glutamate 178–glutamate 191, and isoleucine 205–alanine 227. The disordered stretch occupies residues aspartate 149–aspartate 250. The interval glutamate 194–glutamate 247 is ZID domain. Over residues aspartate 228–alanine 238 the composition is skewed to basic and acidic residues. Positions glutamate 239–aspartate 250 are enriched in acidic residues.

Belongs to the ANP32 family. In terms of assembly, component of a SWR1-like complex. Interacts with H2A.Z/H2AZ1. Post-translationally, phosphorylated. The phosphorylation is nuclear localization signal (NLS)-dependent.

It is found in the cytoplasm. Its subcellular location is the nucleus. Functionally, histone chaperone that specifically mediates the genome-wide removal of histone H2A.Z/H2AZ1 from the nucleosome: removes H2A.Z/H2AZ1 from its normal sites of deposition, especially from enhancer and insulator regions. Not involved in deposition of H2A.Z/H2AZ1 in the nucleosome. May stabilize the evicted H2A.Z/H2AZ1-H2B dimer, thus shifting the equilibrium towards dissociation and the off-chromatin state. Inhibits activity of protein phosphatase 2A (PP2A). Does not inhibit protein phosphatase 1. May play a role in cerebellar development and synaptogenesis. The protein is Acidic leucine-rich nuclear phosphoprotein 32 family member E (anp32e) of Danio rerio (Zebrafish).